Here is a 446-residue protein sequence, read N- to C-terminus: Zinc finger protein 19 (446 aa).

In terms of domain architecture, KRAB spans 2 to 73 (VTFEDVAVHF…EAQDDPPAET (72 aa)). 9 consecutive C2H2-type zinc fingers follow at residues 149–171 (FICEECGKSFSYFSYYARHQRIH), 177–199 (FECSECGKAFNGNSSLIRHQRIH), 205–227 (YQCEECGRAFNDNANLIRHQRIH), 233–255 (YYCTECGNSFTSSSEFVIHQRIH), 261–283 (YECNECGKAFVGNSPLLRHQKIH), 289–311 (YECNECGKSFGRTSHLSQHQRIH), 317–339 (YSCKVCGQAFNFHTKLTRHQRIH), 345–367 (FDCVDCGKAFSAQEQLKRHLRIH), and 373–395 (YVCDECGKAFTSKRNLHQHQRIH). The C2H2-type 10; degenerate zinc finger occupies 401–423 (YEYSKYEKAFGTSSQLGHLEHVH).

Belongs to the krueppel C2H2-type zinc-finger protein family.

The protein localises to the nucleus. Functionally, may be involved in transcriptional regulation. This Pongo abelii (Sumatran orangutan) protein is Zinc finger protein 19 (ZNF19).